We begin with the raw amino-acid sequence, 843 residues long: Protein piwi (843 aa).

Positions 1–12 (MADDQGRGRRRP) match the Nuclear localization signal motif. Positions 1-76 (MADDQGRGRR…TERKPWGDQY (76 aa)) are disordered. The segment at 1 to 257 (MADDQGRGRR…ILLGTEITHK (257 aa)) is interaction with CBX5 and papi. A symmetric dimethylarginine mark is found at R7, R9, R10, and R11. The segment covering 41–72 (PRADPRIEASRERRALEEAPRREGGPTERKPW) has biased composition (basic and acidic residues). The 110-residue stretch at 263 to 372 (TIYDIMRRCS…LIPELCRVTG (110 aa)) folds into the PAZ domain. Positions 538 to 829 (LILCLVPNDN…LATLVGTNLH (292 aa)) constitute a Piwi domain. Position 589 (Q589) interacts with Mg(2+). Catalysis depends on residues D614 and D685. L843 lines the Mg(2+) pocket.

It belongs to the argonaute family. Piwi subfamily. In terms of assembly, in the ovaries, part of a complex composed of at least Panx, nxf2, piwi and Nxt1. The complex is knowns as Panx-induced co-transcriptional silencing (PICTS) complex, Panx-nxf2-dependent TAP/p15 silencing (Pandas complex), SFiNX (silencing factor interacting nuclear export variant) or piwi-Panx-nxf2-p15 (PPNP) complex. Interacts with vas; this interaction is RNA-independent. Interacts with Dcr-1 and Fmr1; these interactions occur in polar granules. Interacts (via N-terminal region) with CBX5 (via chromoshadow domain). Forms a complex with Hsp83 and Hop; probably Hop mediates the interaction between piwi and Hsp83. Forms a complex with Yb body components armi and fs(1)Yb; this interaction is required for proper piRNA loading and nuclear localization of piwi. Interaction of Piwi and fs(1)Yb is likely to occur via armi. Interacts (via the N-terminal region when unmethylated or symmetrically methylated at Arg-10) with papi (via Tudor domain). Interacts with vret. Interacts with Panx. Interacts with arx. Interacts with Tudor-SN. Interacts with Nup358 (via N-terminus). Associates with the nuclear pore complex via interaction with Elys. Interacts with thoc5; the interaction might be partly RNA-mediated. Interacts with xmas-2. Symmetrically dimethylated, most likely by csul. Methylation at Arg-10 enhances binding to papi whereas methylation at Arg-7, Arg-9 or Arg-11 reduces binding affinity to papi. In terms of processing, phosphorylated on serine and tyrosine residues in an Hsp83-dependent manner. Expressed in ovaries (at protein level). Expressed somatically in ovariole terminal filament cells, epithelial sheath cells, cap cells and follicle cells (at protein level). Expressed in nurse cells and oocytes in developing egg chambers (at protein level). In embryos, accumulates in pole cells (at protein level). In larval and adult testis, expressed in a germinal proliferative center at the apical tip containing somatic hub cells and mitotically dividing germ stem cells (at protein level).

The protein localises to the cytoplasm. The protein resides in the nucleus. Its subcellular location is the nucleoplasm. It is found in the chromosome. Acts via the piwi-interacting RNA (piRNA) metabolic process, which mediates the repression of transposable elements during meiosis by forming complexes composed of piRNAs and Piwi proteins and governs the methylation and subsequent repression of transposons. Directly binds piRNAs, a class of 24 to 30 nucleotide RNAs that are generated by a Dicer-independent mechanism and are primarily derived from transposons and other repeated sequence elements. In ovarian somatic cells, mediates silencing of transposable elements at the transcriptional level in a mael-dependent manner. Involved in silencing of long terminal repeat (LTR) retrotransposons in male germline. In testis, regulates spermatogenesis together with Tudor-SN. In germ cells, mediates silencing at both transcriptional and post-transcriptional levels and is involved in the maintenance of populations of primary and secondary piRNAs. Piwi-mediated transcriptional silencing is accompanied by the formation of His3 trimethylated on 'Lys-10' (H3K9me3) associated euchromatin and heterochromatin. In ovary, associates predominantly with antisense piRNAs that contain uridine at their 5' end. Association with sense piRNAs is also observed but to a lesser extent. Mediates a somatic signaling mechanism required for the maintenance of germline stem cells to produce and maintain a daughter germline stem cell. It is not essential for the further differentiation of the committed daughter cell. Acts cell autonomously to promote germline stem cell division. Its role in stem cell maintenance does not seem to require nuclear localization. Required maternally for the posterior localization of osk and vas and for pole cell formation during oogenesis and early embryogenesis. Together with Hop and Hsp83, mediates canalization, also known as developmental robustness, likely via epigenetic silencing of existing genetic variants and suppression of transposon-induced new genetic variation. Shows RNA cleavage activity, although is not required for any of its known functions. In the ovaries, forms a complex with nxf2, Panx and Nxt1 which acts as effectors of cotranscriptional transposon silencing. The sequence is that of Protein piwi from Drosophila melanogaster (Fruit fly).